Consider the following 373-residue polypeptide: D-alanine--D-alanine ligase A (373 aa).

An ATP-grasp domain is found at 146 to 355; that stretch reads KRLAEFAGIP…YGELLSRLVD (210 aa). Residue 179-234 participates in ATP binding; sequence VEGLSLPVFVKPCNMGSSVGIHKVKTQDALEAALDDAFRYDVKVLVQQGIDAREIE. Asp308, Glu322, and Asn324 together coordinate Mg(2+).

It belongs to the D-alanine--D-alanine ligase family. It depends on Mg(2+) as a cofactor. Mn(2+) is required as a cofactor.

The protein localises to the cytoplasm. It carries out the reaction 2 D-alanine + ATP = D-alanyl-D-alanine + ADP + phosphate + H(+). Its pathway is cell wall biogenesis; peptidoglycan biosynthesis. Cell wall formation. The chain is D-alanine--D-alanine ligase A from Bradyrhizobium diazoefficiens (strain JCM 10833 / BCRC 13528 / IAM 13628 / NBRC 14792 / USDA 110).